A 123-amino-acid chain; its full sequence is Large ribosomal subunit protein uL22 (123 aa).

Belongs to the universal ribosomal protein uL22 family. In terms of assembly, part of the 50S ribosomal subunit.

In terms of biological role, this protein binds specifically to 23S rRNA; its binding is stimulated by other ribosomal proteins, e.g. L4, L17, and L20. It is important during the early stages of 50S assembly. It makes multiple contacts with different domains of the 23S rRNA in the assembled 50S subunit and ribosome. Functionally, the globular domain of the protein is located near the polypeptide exit tunnel on the outside of the subunit, while an extended beta-hairpin is found that lines the wall of the exit tunnel in the center of the 70S ribosome. The sequence is that of Large ribosomal subunit protein uL22 from Synechococcus sp. (strain JA-3-3Ab) (Cyanobacteria bacterium Yellowstone A-Prime).